The following is a 218-amino-acid chain: Small ribosomal subunit protein uS3c (218 aa).

One can recognise a KH type-2 domain in the interval 47–118 (VQKNLKISSG…KLNITITRIA (72 aa)).

It belongs to the universal ribosomal protein uS3 family. Part of the 30S ribosomal subunit.

It localises to the plastid. The protein localises to the chloroplast. The sequence is that of Small ribosomal subunit protein uS3c (rps3) from Daucus carota (Wild carrot).